The following is a 315-amino-acid chain: MACTEFSFHVPSLEELAEVLQKGLKDNFAHVQVSVVDCPDLTKEPFTFPVKGICGQTRIAEVGGVPYLLPLVNKKKVYDLNEIAKEIKLPGAFILGAGAGPFQTLGFNSEFMPIVQTASEHHQPVNGSYFARANPADGKCLLEKYSQKYPDFGCALLANLFASEGQPGKVIEVQAKKRTGEHNFVSCMRQTLEKHYGDKPVGMGGTFLVQKGKVKAHIMPAEFSSCSLNSDEAVNQWLNFYEMKAPLVCLPVFVSKDPGLDLRLEHTHFFSHHGEGGHYHYDTTPDTVEYLGYFSPAQFLYRIDQPKETHAFGRD.

His-266, His-268, and His-278 together coordinate Zn(2+).

In terms of assembly, monomer. Zn(2+) is required as a cofactor.

It is found in the nucleus. Its subcellular location is the cytoplasm. In terms of biological role, exhibits ester hydrolase activity on the substrate p-nitrophenyl acetate, in vitro. Regulates DNA damage and repair by regulating HIF1A degradation via chaperone-mediated autophagy (CMA). This Rattus norvegicus (Rat) protein is Ester hydrolase C11orf54 homolog.